A 197-amino-acid polypeptide reads, in one-letter code: Protein shisa-4 (197 aa).

The signal sequence occupies residues 1–27 (MPPAGPRGTAPLAAVVLLVLGAPLALA). Residues 28–87 (SEDCLWYLDRNGSWHPGFDCEFFTFCCGTCYQRYCCRDLTLLITERQQKHCLAFSPKTIA) lie on the Extracellular side of the membrane. The helical transmembrane segment at 88–108 (GIASAVILFVAVVATTICCFL) threads the bilayer. Residues 109–197 (CSCCYLYRRR…MPPQPSYPGA (89 aa)) are Cytoplasmic-facing.

The protein belongs to the shisa family.

Its subcellular location is the membrane. The chain is Protein shisa-4 (Shisa4) from Mus musculus (Mouse).